Here is a 194-residue protein sequence, read N- to C-terminus: Putative manganese efflux pump MntP (194 aa).

6 helical membrane-spanning segments follow: residues 3–23 (PITI…AAIG), 37–57 (LYVA…GWLL), 65–85 (IATF…IHMI), 112–132 (LAAT…SLAF), 139–159 (IVAA…VMLG), and 170–190 (AEIV…YEHL).

This sequence belongs to the MntP (TC 9.B.29) family.

The protein localises to the cell inner membrane. Probably functions as a manganese efflux pump. The protein is Putative manganese efflux pump MntP of Xylella fastidiosa (strain 9a5c).